Reading from the N-terminus, the 221-residue chain is Protein-L-isoaspartate O-methyltransferase (221 aa).

Serine 64 is a catalytic residue.

It belongs to the methyltransferase superfamily. L-isoaspartyl/D-aspartyl protein methyltransferase family.

The protein resides in the cytoplasm. It carries out the reaction [protein]-L-isoaspartate + S-adenosyl-L-methionine = [protein]-L-isoaspartate alpha-methyl ester + S-adenosyl-L-homocysteine. Its function is as follows. Catalyzes the methyl esterification of L-isoaspartyl residues in peptides and proteins that result from spontaneous decomposition of normal L-aspartyl and L-asparaginyl residues. It plays a role in the repair and/or degradation of damaged proteins. The sequence is that of Protein-L-isoaspartate O-methyltransferase from Thermococcus sibiricus (strain DSM 12597 / MM 739).